A 311-amino-acid polypeptide reads, in one-letter code: Apolipoprotein E (311 aa).

Positions Met1–Ala18 are cleaved as a signal peptide. A run of 8 repeats spans residues Ala72 to Gly93, Pro94 to Gly115, Ala116 to Gly137, Gln138 to Met159, Arg160 to Glu181, Arg182 to Ala203, Asn204 to Arg225, and Gly226 to Glu247. An 8 X 22 AA approximate tandem repeats region spans residues Ala72–Glu247. Met135 carries the methionine sulfoxide modification. Ser139 is subject to Phosphoserine. The segment at His150–Arg160 is LDL and other lipoprotein receptors binding. Residue Met154–Arg157 coordinates heparin. Positions Thr202 to Met282 are lipid-binding and lipoprotein association. Gly221–Leu228 serves as a coordination point for heparin. Residues Gln258–Gln311 form a homooligomerization region. The specificity for association with VLDL stretch occupies residues Arg270 to Met282.

This sequence belongs to the apolipoprotein A1/A4/E family. As to quaternary structure, homotetramer. May interact with ABCA1; functionally associated with ABCA1 in the biogenesis of HDLs. May interact with APP/A4 amyloid-beta peptide; the interaction is extremely stable in vitro but its physiological significance is unclear. May interact with MAPT. May interact with MAP2. In the cerebrospinal fluid, interacts with secreted SORL1. Interacts with PMEL; this allows the loading of PMEL luminal fragment on ILVs to induce fibril nucleation. APOE exists as multiple glycosylated and sialylated glycoforms within cells and in plasma. The extent of glycosylation and sialylation are tissue and context specific. Post-translationally, glycated in plasma VLDL. In terms of processing, phosphorylated by FAM20C in the extracellular medium.

It is found in the secreted. Its subcellular location is the extracellular space. It localises to the extracellular matrix. The protein localises to the extracellular vesicle. The protein resides in the endosome. It is found in the multivesicular body. In terms of biological role, APOE is an apolipoprotein, a protein associating with lipid particles, that mainly functions in lipoprotein-mediated lipid transport between organs via the plasma and interstitial fluids. APOE is a core component of plasma lipoproteins and is involved in their production, conversion and clearance. Apolipoproteins are amphipathic molecules that interact both with lipids of the lipoprotein particle core and the aqueous environment of the plasma. As such, APOE associates with chylomicrons, chylomicron remnants, very low density lipoproteins (VLDL) and intermediate density lipoproteins (IDL) but shows a preferential binding to high-density lipoproteins (HDL). It also binds a wide range of cellular receptors including the LDL receptor/LDLR and the very low-density lipoprotein receptor/VLDLR that mediate the cellular uptake of the APOE-containing lipoprotein particles. Finally, APOE also has a heparin-binding activity and binds heparan-sulfate proteoglycans on the surface of cells, a property that supports the capture and the receptor-mediated uptake of APOE-containing lipoproteins by cells. In Mus musculus (Mouse), this protein is Apolipoprotein E (Apoe).